The chain runs to 673 residues: RAS guanyl-releasing protein 4 (673 aa).

Basic residues-rich tracts occupy residues 1–10 (MNRKDSKRKS) and 20–32 (GRGRPRQARRHKT). Disordered regions lie at residues 1 to 34 (MNRKDSKRKSHQECPVKTGGRGRPRQARRHKTCP) and 162 to 188 (QSLGDFSSRLSPGGPGPPHPMSSPGLG). Residues 49–172 (GMLNEGGCSE…SLGDFSSRLS (124 aa)) form the N-terminal Ras-GEF domain. One can recognise a Ras-GEF domain in the interval 201 to 432 (ETGELAEHLT…YELSYAREPR (232 aa)). The 36-residue stretch at 466–501 (HVEQLVESVFKNYDPDGRGTISQEDFERLSGNFPFA) folds into the EF-hand domain. Residues 540-590 (LHTFQEVTFRKPTFCNSCSGFLWGVTKQGYRCRDCGLCCHRHCRDQVKVEC) form a Phorbol-ester/DAG-type zinc finger. Disordered stretches follow at residues 593–618 (RPGAKGDASPPEAPVPPTPVPQASCG) and 638–673 (RHAWTQTESPHPSWEPETVPLPAKASPPTESSKLNS). Over residues 603 to 612 (PEAPVPPTPV) the composition is skewed to pro residues.

It belongs to the RASGRP family.

Its subcellular location is the cytoplasm. It localises to the cell membrane. Its function is as follows. Functions as a cation- and diacylglycerol (DAG)-regulated nucleotide exchange factor activating Ras through the exchange of bound GDP for GTP. In neutrophils, participates in a phospholipase C-activating N-formyl peptide-activated GPCR (G protein-coupled receptor) signaling pathway by promoting Ras-mediated activation of PIK3CG/PI3Kgamma to promote neutrophil functional responses. In CD117(+) dendritic cells and mast cells, participates in an lipopolysaccharide (LPS)-activated signaling pathway that stimulates the production of interferon-gamma and other pro-inflammatory cytokines by natural killer (NK) cells. May function in mast cell differentiation. Does not appear to be required for the development of B-cells, DC-cells, T-cells, or NK-cells. The sequence is that of RAS guanyl-releasing protein 4 (RASGRP4) from Bos taurus (Bovine).